We begin with the raw amino-acid sequence, 334 residues long: Biotin synthase (334 aa).

The region spanning 55–280 (EEIEVEGIIS…HTMLRFAGGR (226 aa)) is the Radical SAM core domain. Residues cysteine 70, cysteine 74, and cysteine 77 each contribute to the [4Fe-4S] cluster site. 3 residues coordinate [2Fe-2S] cluster: cysteine 113, cysteine 205, and arginine 275.

Belongs to the radical SAM superfamily. Biotin synthase family. Homodimer. It depends on [4Fe-4S] cluster as a cofactor. Requires [2Fe-2S] cluster as cofactor.

It carries out the reaction (4R,5S)-dethiobiotin + (sulfur carrier)-SH + 2 reduced [2Fe-2S]-[ferredoxin] + 2 S-adenosyl-L-methionine = (sulfur carrier)-H + biotin + 2 5'-deoxyadenosine + 2 L-methionine + 2 oxidized [2Fe-2S]-[ferredoxin]. It participates in cofactor biosynthesis; biotin biosynthesis; biotin from 7,8-diaminononanoate: step 2/2. In terms of biological role, catalyzes the conversion of dethiobiotin (DTB) to biotin by the insertion of a sulfur atom into dethiobiotin via a radical-based mechanism. The sequence is that of Biotin synthase from Corynebacterium glutamicum (strain ATCC 13032 / DSM 20300 / JCM 1318 / BCRC 11384 / CCUG 27702 / LMG 3730 / NBRC 12168 / NCIMB 10025 / NRRL B-2784 / 534).